The chain runs to 386 residues: Bifunctional enzyme IspD/IspF (386 aa).

The segment at 1-226 (MATPSPLPSF…EDFMADLLPV (226 aa)) is 2-C-methyl-D-erythritol 4-phosphate cytidylyltransferase. Positions 227–386 (RVGTGFDVHK…ATVVRKDTPA (160 aa)) are 2-C-methyl-D-erythritol 2,4-cyclodiphosphate synthase. A divalent metal cation is bound by residues Asp-233 and His-235. 4-CDP-2-C-methyl-D-erythritol 2-phosphate-binding positions include 233–235 (DVH) and 259–260 (HS). His-267 serves as a coordination point for a divalent metal cation. Residues 281-283 (DIG), 357-360 (TTTE), Phe-364, and Arg-367 each bind 4-CDP-2-C-methyl-D-erythritol 2-phosphate.

In the N-terminal section; belongs to the IspD/TarI cytidylyltransferase family. IspD subfamily. The protein in the C-terminal section; belongs to the IspF family. The cofactor is a divalent metal cation.

The enzyme catalyses 2-C-methyl-D-erythritol 4-phosphate + CTP + H(+) = 4-CDP-2-C-methyl-D-erythritol + diphosphate. It carries out the reaction 4-CDP-2-C-methyl-D-erythritol 2-phosphate = 2-C-methyl-D-erythritol 2,4-cyclic diphosphate + CMP. Its pathway is isoprenoid biosynthesis; isopentenyl diphosphate biosynthesis via DXP pathway; isopentenyl diphosphate from 1-deoxy-D-xylulose 5-phosphate: step 2/6. The protein operates within isoprenoid biosynthesis; isopentenyl diphosphate biosynthesis via DXP pathway; isopentenyl diphosphate from 1-deoxy-D-xylulose 5-phosphate: step 4/6. In terms of biological role, bifunctional enzyme that catalyzes the formation of 4-diphosphocytidyl-2-C-methyl-D-erythritol from CTP and 2-C-methyl-D-erythritol 4-phosphate (MEP) (IspD), and catalyzes the conversion of 4-diphosphocytidyl-2-C-methyl-D-erythritol 2-phosphate (CDP-ME2P) to 2-C-methyl-D-erythritol 2,4-cyclodiphosphate (ME-CPP) with a corresponding release of cytidine 5-monophosphate (CMP) (IspF). The protein is Bifunctional enzyme IspD/IspF of Erythrobacter litoralis (strain HTCC2594).